A 161-amino-acid chain; its full sequence is Large ribosomal subunit protein uL15 (161 aa).

A disordered region spans residues 1–39 (MTKLNELAPREGSTKGRMRVGRGPGSGKGKTAGRGVKGQ). Residues 22 to 36 (RGPGSGKGKTAGRGV) are compositionally biased toward gly residues.

It belongs to the universal ribosomal protein uL15 family. Part of the 50S ribosomal subunit.

Its function is as follows. Binds to the 23S rRNA. This is Large ribosomal subunit protein uL15 from Caulobacter vibrioides (strain ATCC 19089 / CIP 103742 / CB 15) (Caulobacter crescentus).